The sequence spans 316 residues: Acetyl-coenzyme A carboxylase carboxyl transferase subunit beta (316 aa).

The region spanning 39-308 (LWHKCSKCGV…PPHMVLWETM (270 aa)) is the CoA carboxyltransferase N-terminal domain. Residues Cys43, Cys46, Cys62, and Cys65 each coordinate Zn(2+). Residues 43–65 (CSKCGVLAYTKDLKANQMVCIEC) form a C4-type zinc finger.

This sequence belongs to the AccD/PCCB family. As to quaternary structure, acetyl-CoA carboxylase is a heterohexamer composed of biotin carboxyl carrier protein (AccB), biotin carboxylase (AccC) and two subunits each of ACCase subunit alpha (AccA) and ACCase subunit beta (AccD). Zn(2+) is required as a cofactor.

It is found in the cytoplasm. The catalysed reaction is N(6)-carboxybiotinyl-L-lysyl-[protein] + acetyl-CoA = N(6)-biotinyl-L-lysyl-[protein] + malonyl-CoA. It functions in the pathway lipid metabolism; malonyl-CoA biosynthesis; malonyl-CoA from acetyl-CoA: step 1/1. Functionally, component of the acetyl coenzyme A carboxylase (ACC) complex. Biotin carboxylase (BC) catalyzes the carboxylation of biotin on its carrier protein (BCCP) and then the CO(2) group is transferred by the transcarboxylase to acetyl-CoA to form malonyl-CoA. In Nostoc punctiforme (strain ATCC 29133 / PCC 73102), this protein is Acetyl-coenzyme A carboxylase carboxyl transferase subunit beta.